Reading from the N-terminus, the 355-residue chain is S-adenosylmethionine:tRNA ribosyltransferase-isomerase (355 aa).

The protein belongs to the QueA family. Monomer.

It localises to the cytoplasm. The catalysed reaction is 7-aminomethyl-7-carbaguanosine(34) in tRNA + S-adenosyl-L-methionine = epoxyqueuosine(34) in tRNA + adenine + L-methionine + 2 H(+). It participates in tRNA modification; tRNA-queuosine biosynthesis. Its function is as follows. Transfers and isomerizes the ribose moiety from AdoMet to the 7-aminomethyl group of 7-deazaguanine (preQ1-tRNA) to give epoxyqueuosine (oQ-tRNA). The sequence is that of S-adenosylmethionine:tRNA ribosyltransferase-isomerase from Burkholderia orbicola (strain AU 1054).